The chain runs to 278 residues: MGFIDDEVKRLGDVIASLEDRVRSLETRDFSGKPVTTAEQLRMVLMGPPGAGKGTQAPKIKEKFNCCHLATGDMLRAQVAKGTALGKQAKKIMNEGGLVSDDIVIGMIKDELENNKECQGGFILDGFPRTVPQAEGLDAMLRERNLPLQHAVELKIDDSLLVARITGRLVHPASGRSYHRIFNPPKDDMKDDITGEPLVQRSDDNAEALRKRLETYHKQTAPVVGYYQNTGIWKAIDASQEPAQVWKSLLAIFEGDKAKASSAGSGIMSKIASAAKSS.

Residue 50–55 (GAGKGT) participates in ATP binding. The interval 70-99 (ATGDMLRAQVAKGTALGKQAKKIMNEGGLV) is NMP. AMP contacts are provided by residues T71, R76, 97–99 (GLV), 126–129 (GFPR), and Q133. An LID region spans residues 167–204 (GRLVHPASGRSYHRIFNPPKDDMKDDITGEPLVQRSDD). Residues R168 and 177 to 178 (SY) each bind ATP. Residues R201 and R212 each coordinate AMP. Q240 is a binding site for ATP.

It belongs to the adenylate kinase family. AK2 subfamily. As to quaternary structure, monomer.

The protein localises to the cytoplasm. It is found in the cytosol. The protein resides in the mitochondrion intermembrane space. The enzyme catalyses AMP + ATP = 2 ADP. Catalyzes the reversible transfer of the terminal phosphate group between ATP and AMP. Plays an important role in cellular energy homeostasis and in adenine nucleotide metabolism. Adenylate kinase activity is critical for regulation of the phosphate utilization and the AMP de novo biosynthesis pathways. This Neurospora crassa (strain ATCC 24698 / 74-OR23-1A / CBS 708.71 / DSM 1257 / FGSC 987) protein is Adenylate kinase (adk-1).